The following is a 1251-amino-acid chain: Phospholipid-transporting ATPase IC (1251 aa).

The segment at 1-52 (MSTERDSETTFDEESQPNDEVVPYSDDETEDELEDQGSTVEPEQNRVNREAE) is disordered. Topologically, residues 1 to 121 (MSTERDSETT…LFEQFKRAAN (121 aa)) are cytoplasmic. The span at 25–35 (SDDETEDELED) shows a compositional bias: acidic residues. Residues 43–52 (EQNRVNREAE) show a composition bias toward basic and acidic residues. Residues 122–142 (FYFLILLILQAIPQISTLAWY) traverse the membrane as a helical segment. At 143–144 (TT) the chain is on the exoplasmic loop side. A helical transmembrane segment spans residues 145 to 165 (LVPLLLVLGITAIKDLVDDVA). At 166–339 (RHKMDKEINN…RTKIDYLMNY (174 aa)) the chain is on the cytoplasmic side. A helical membrane pass occupies residues 340-360 (MVYTIFIVLILVSAGLAIGHA). At 361 to 385 (YWEAQVGNYSWYLYDGENATPSYRG) the chain is on the exoplasmic loop side. The chain crosses the membrane as a helical span at residues 386–406 (FLNFWGYIIVLNTMVPISLYV). Residues 407 to 952 (SVEVIRLGQS…SYIRMCKFLR (546 aa)) lie on the Cytoplasmic side of the membrane. The active-site 4-aspartylphosphate intermediate is the Asp-454. ATP is bound by residues Asp-454, Lys-455, Thr-456, Glu-555, Phe-596, Lys-619, Arg-652, Thr-732, Gly-733, Asp-734, Arg-867, and Lys-873. Position 454 (Asp-454) interacts with Mg(2+). Thr-456 serves as a coordination point for Mg(2+). Asp-893 is a Mg(2+) binding site. The ATP site is built by Asn-896 and Asp-897. Mg(2+) is bound at residue Asp-897. The helical transmembrane segment at 953–973 (YFFYKNFAFTLVHFWYSFFNG) threads the bilayer. Residues 974-982 (YSAQTAYED) are Exoplasmic loop-facing. Residues 983-1003 (WFITLYNVLYSSLPVLLMGLL) traverse the membrane as a helical segment. Over 1004–1032 (DQDVSDKLSLRFPGLYVVGQRDLLFNYKR) the chain is Cytoplasmic. The chain crosses the membrane as a helical span at residues 1033–1053 (FFVSLLHGVLTSMVLFFIPLG). Residues 1054 to 1071 (AYLQTVGQDGEAPSDYQS) lie on the Exoplasmic loop side of the membrane. A helical membrane pass occupies residues 1072-1092 (FAVTVASALVITVNFQIGLDT). At 1093-1094 (SY) the chain is on the cytoplasmic side. A helical membrane pass occupies residues 1095–1115 (WTFVNAFSIFGSIALYFGIMF). Residues 1116-1142 (DFHSAGIHVLFPSAFQFTGTASNALRQ) lie on the Exoplasmic loop side of the membrane. Residues 1143–1163 (PYIWLTIILTVAVCLLPVVAI) traverse the membrane as a helical segment. Topologically, residues 1164-1251 (RFLSMTIWPS…TAEYRRTVES (88 aa)) are cytoplasmic. Ser-1223 is modified (phosphoserine).

This sequence belongs to the cation transport ATPase (P-type) (TC 3.A.3) family. Type IV subfamily. As to quaternary structure, component of a P4-ATPase flippase complex which consists of a catalytic alpha subunit ATP8B1 and an accessory beta subunit TMEM30A. The flippase ATP8B1:TMEM30A complex can form an intermediate phosphoenzyme in vitro. Also interacts with beta subunit TMEM30B. Mg(2+) is required as a cofactor. Hepatocytes, bile duct, intestinal epithelial cells (cholangiocytes and ileocytes), and pancreatic acinar cells.

It is found in the cell membrane. The protein localises to the apical cell membrane. It localises to the cell projection. The protein resides in the stereocilium. Its subcellular location is the endoplasmic reticulum. It is found in the golgi apparatus. The catalysed reaction is ATP + H2O + phospholipidSide 1 = ADP + phosphate + phospholipidSide 2.. The enzyme catalyses a 1,2-diacyl-sn-glycero-3-phosphocholine(out) + ATP + H2O = a 1,2-diacyl-sn-glycero-3-phosphocholine(in) + ADP + phosphate + H(+). It carries out the reaction a 1,2-diacyl-sn-glycero-3-phospho-L-serine(out) + ATP + H2O = a 1,2-diacyl-sn-glycero-3-phospho-L-serine(in) + ADP + phosphate + H(+). Catalytic component of a P4-ATPase flippase complex which catalyzes the hydrolysis of ATP coupled to the transport of phospholipids, in particular phosphatidylcholines (PC), from the outer to the inner leaflet of the plasma membrane. May participate in the establishment of the canalicular membrane integrity by ensuring asymmetric distribution of phospholipids in the canicular membrane. Thus may have a role in the regulation of bile acids transport into the canaliculus, uptake of bile acids from intestinal contents into intestinal mucosa or both and protect hepatocytes from bile salts. Involved in the microvillus formation in polarized epithelial cells; the function seems to be independent from its flippase activity. Participates in correct apical membrane localization of CDC42, CFTR and SLC10A2. Enables CDC42 clustering at the apical membrane during enterocyte polarization through the interaction between CDC42 polybasic region and negatively charged membrane lipids provided by ATP8B1. Together with TMEM30A is involved in uptake of the synthetic drug alkylphospholipid perifosine. Required for the preservation of cochlear hair cells in the inner ear. According PubMed:20852622 is proposed to act as cardiolipin transporter during inflammatory injury; the function is questioned by PubMed:21475228. The polypeptide is Phospholipid-transporting ATPase IC (Mus musculus (Mouse)).